Reading from the N-terminus, the 249-residue chain is Elongation factor Ts (249 aa).

The segment at 82-85 (TDFV) is involved in Mg(2+) ion dislocation from EF-Tu. The segment at 215–249 (QAGQLAPEAESTTETADATSETTTEKSSAKKKKKK) is disordered. Over residues 222 to 236 (EAESTTETADATSET) the composition is skewed to low complexity.

Belongs to the EF-Ts family.

The protein resides in the cytoplasm. Functionally, associates with the EF-Tu.GDP complex and induces the exchange of GDP to GTP. It remains bound to the aminoacyl-tRNA.EF-Tu.GTP complex up to the GTP hydrolysis stage on the ribosome. In Rippkaea orientalis (strain PCC 8801 / RF-1) (Cyanothece sp. (strain PCC 8801)), this protein is Elongation factor Ts.